We begin with the raw amino-acid sequence, 290 residues long: uncharacterized protein (290 aa).

One can recognise an AB hydrolase-1 domain in the interval 30–274 (PTILLLHGFP…YDTGHFALET (245 aa)). His-269 is an active-site residue.

Belongs to the DmpD/TodF/XylF esterase family.

This is an uncharacterized protein from Saccharomyces cerevisiae (strain ATCC 204508 / S288c) (Baker's yeast).